A 273-amino-acid polypeptide reads, in one-letter code: 3-methyl-2-oxobutanoate hydroxymethyltransferase (273 aa).

Mg(2+) contacts are provided by aspartate 49 and aspartate 88. 3-methyl-2-oxobutanoate contacts are provided by residues 49-50 (DS), aspartate 88, and lysine 118. Position 120 (glutamate 120) interacts with Mg(2+). The active-site Proton acceptor is glutamate 187.

This sequence belongs to the PanB family. In terms of assembly, homodecamer; pentamer of dimers. It depends on Mg(2+) as a cofactor.

It localises to the cytoplasm. The catalysed reaction is 3-methyl-2-oxobutanoate + (6R)-5,10-methylene-5,6,7,8-tetrahydrofolate + H2O = 2-dehydropantoate + (6S)-5,6,7,8-tetrahydrofolate. The protein operates within cofactor biosynthesis; (R)-pantothenate biosynthesis; (R)-pantoate from 3-methyl-2-oxobutanoate: step 1/2. Functionally, catalyzes the reversible reaction in which hydroxymethyl group from 5,10-methylenetetrahydrofolate is transferred onto alpha-ketoisovalerate to form ketopantoate. In Sinorhizobium medicae (strain WSM419) (Ensifer medicae), this protein is 3-methyl-2-oxobutanoate hydroxymethyltransferase.